The primary structure comprises 248 residues: MWLCPLALNLILMAASGAVCEVKDVCVGSPGIPGTPGSHGLPGRDGRDGLKGDPGPPGPMGPPGEMPCPPGNDGLPGAPGIPGECGEKGEPGERGPPGLPAHLDEELQATLHDFRHQILQTRGALSLQGSIMTVGEKVFSSNGQSITFDAIQEACARAGGRIAVPRNPEENEAIASFVKKYNTYAYVGLTEGPSPGDFRYSDGTPVNYTNWYRGEPAGRGKEQCVEMYTDGQWNDRNCLYSRLTICEF.

An N-terminal signal peptide occupies residues 1 to 20 (MWLCPLALNLILMAASGAVC). A Collagen-like domain is found at 28–100 (GSPGIPGTPG…PGERGPPGLP (73 aa)). 9 positions are modified to 4-hydroxyproline: Pro-30, Pro-33, Pro-36, Pro-42, Pro-54, Pro-57, Pro-63, Pro-67, and Pro-70. The segment at 31 to 101 (GIPGTPGSHG…GERGPPGLPA (71 aa)) is disordered. Positions 42 to 51 (PGRDGRDGLK) are enriched in basic and acidic residues. The span at 54 to 70 (PGPPGPMGPPGEMPCPP) shows a compositional bias: pro residues. Residues 132-248 (MTVGEKVFSS…LYSRLTICEF (117 aa)) form the C-type lectin domain. 2 disulfides stabilise this stretch: Cys-155/Cys-246 and Cys-224/Cys-238. Asn-207 carries an N-linked (GlcNAc...) asparagine glycan.

Belongs to the SFTPA family. Oligomeric complex of 6 set of homotrimers. Interacts with CD93. In terms of assembly, (Microbial infection) Binds M.bovis cell surface protein Apa via its glycosylated sites; probably also recognizes other bacterial moieties. As to quaternary structure, (Microbial infection) Binds to the S.aureus extracellular adherence protein, Eap, thereby enhancing phagocytosis and killing of S.aureus by alveolar macrophages. (Microbial infection) Interacts with M.pneumoniae CARDS toxin; CARDS probably uses this protein as a receptor. Post-translationally, N-acetylated.

The protein localises to the secreted. Its subcellular location is the extracellular space. The protein resides in the extracellular matrix. It localises to the surface film. In terms of biological role, in presence of calcium ions, it binds to surfactant phospholipids and contributes to lower the surface tension at the air-liquid interface in the alveoli of the mammalian lung and is essential for normal respiration. Enhances the expression of MYO18A/SP-R210 on alveolar macrophages. (Microbial infection) Recognition of M.tuberculosis by dendritic cells may occur partially via this molecule. Can recognize, bind, and opsonize pathogens to enhance their elimination by alveolar macrophages. Functionally, (Microbial infection) Binds M.pneumoniae CARDS toxin, serves as one receptor for this pathogen. When SFTPA1 is down-regulated by siRNA, less toxin binds to human cells and less vacuolization (a symptom of M.pneumoniae infection) is seen. This chain is Pulmonary surfactant-associated protein A1 (SFTPA1), found in Homo sapiens (Human).